A 188-amino-acid chain; its full sequence is Ribose 1,5-bisphosphate phosphokinase PhnN (188 aa).

Residue 9–16 (GPSGAGKD) coordinates ATP.

The protein belongs to the ribose 1,5-bisphosphokinase family.

The enzyme catalyses alpha-D-ribose 1,5-bisphosphate + ATP = 5-phospho-alpha-D-ribose 1-diphosphate + ADP. It functions in the pathway metabolic intermediate biosynthesis; 5-phospho-alpha-D-ribose 1-diphosphate biosynthesis; 5-phospho-alpha-D-ribose 1-diphosphate from D-ribose 5-phosphate (route II): step 3/3. Functionally, catalyzes the phosphorylation of ribose 1,5-bisphosphate to 5-phospho-D-ribosyl alpha-1-diphosphate (PRPP). This chain is Ribose 1,5-bisphosphate phosphokinase PhnN, found in Pectobacterium atrosepticum (strain SCRI 1043 / ATCC BAA-672) (Erwinia carotovora subsp. atroseptica).